A 285-amino-acid polypeptide reads, in one-letter code: Bifunctional protein FolD (285 aa).

NADP(+) contacts are provided by residues 165 to 167 (GRG), Thr192, and Val233.

The protein belongs to the tetrahydrofolate dehydrogenase/cyclohydrolase family. In terms of assembly, homodimer.

The enzyme catalyses (6R)-5,10-methylene-5,6,7,8-tetrahydrofolate + NADP(+) = (6R)-5,10-methenyltetrahydrofolate + NADPH. The catalysed reaction is (6R)-5,10-methenyltetrahydrofolate + H2O = (6R)-10-formyltetrahydrofolate + H(+). It participates in one-carbon metabolism; tetrahydrofolate interconversion. Its function is as follows. Catalyzes the oxidation of 5,10-methylenetetrahydrofolate to 5,10-methenyltetrahydrofolate and then the hydrolysis of 5,10-methenyltetrahydrofolate to 10-formyltetrahydrofolate. This Corynebacterium jeikeium (strain K411) protein is Bifunctional protein FolD.